Reading from the N-terminus, the 273-residue chain is NADPH-dependent 7-cyano-7-deazaguanine reductase (273 aa).

Substrate is bound at residue 81–83 (VES). An NADPH-binding site is contributed by 83 to 84 (SK). C179 acts as the Thioimide intermediate in catalysis. D186 (proton donor) is an active-site residue. 218–219 (AE) serves as a coordination point for substrate. 247-248 (RG) is a binding site for NADPH.

This sequence belongs to the GTP cyclohydrolase I family. QueF type 2 subfamily. In terms of assembly, homodimer.

It is found in the cytoplasm. It carries out the reaction 7-aminomethyl-7-carbaguanine + 2 NADP(+) = 7-cyano-7-deazaguanine + 2 NADPH + 3 H(+). It participates in tRNA modification; tRNA-queuosine biosynthesis. Its function is as follows. Catalyzes the NADPH-dependent reduction of 7-cyano-7-deazaguanine (preQ0) to 7-aminomethyl-7-deazaguanine (preQ1). The polypeptide is NADPH-dependent 7-cyano-7-deazaguanine reductase (Rickettsia akari (strain Hartford)).